We begin with the raw amino-acid sequence, 223 residues long: Carnitine transport permease protein OpuCD (223 aa).

Residues 22-202 form the ABC transmembrane type-1 domain; it reads FWRHFLMSAY…VMAILADVLL (181 aa). The next 5 membrane-spanning stretches (helical) occupy residues 27–47, 63–83, 87–107, 148–168, and 182–202; these read LMSA…GVYI, IIQT…MGLG, VVLS…YTGI, ALVI…GGLG, and AIIL…DVLL.

Belongs to the binding-protein-dependent transport system permease family. As to quaternary structure, the complex is composed of two ATP-binding proteins (OpuCA), two transmembrane proteins (OpuCB and OpuCD) and a solute-binding protein (OpuCC).

It localises to the cell membrane. Its function is as follows. Part of the ABC transporter complex OpuCABCD involved in carnitine uptake. Probably responsible for the translocation of the substrate across the membrane. Involved, with BetL and GbuABC, in osmoprotection and cryoprotection of Listeria. Can also mediate weak glycine betaine transport. The protein is Carnitine transport permease protein OpuCD (opuCD) of Listeria monocytogenes serotype 1/2a (strain 10403S).